The following is a 419-amino-acid chain: G protein-activated inward rectifier potassium channel 4 (419 aa).

At 1–86 (MAGDSRNAMN…LFTTLVDLKW (86 aa)) the chain is on the cytoplasmic side. S5 carries the post-translational modification Phosphoserine. A helical transmembrane segment spans residues 87–111 (RFNLLVFTMVYTITWLFFGFIWWLI). Topologically, residues 112–135 (AYVRGDLDHVGDQEWIPCVENLSG) are extracellular. The segment at residues 136–147 (FVSAFLFSIETE) is an intramembrane region (helical; Pore-forming). Residues 148–154 (TTIGYGF) constitute an intramembrane region (pore-forming). Positions 149–154 (TIGYGF) match the Selectivity filter motif. At 155–163 (RVITEKCPE) the chain is on the extracellular side. The helical transmembrane segment at 164 to 185 (GIILLLVQAILGSIVNAFMVGC) threads the bilayer. Over 186 to 419 (MFVKISQPKK…SVSQATRGSM (234 aa)) the chain is Cytoplasmic. The interval 388 to 419 (GCAEAGNEAEAEKDEEGEPNGLSVSQATRGSM) is disordered. Positions 394–405 (NEAEAEKDEEGE) are enriched in acidic residues. Residues 409-419 (LSVSQATRGSM) are compositionally biased toward polar residues.

This sequence belongs to the inward rectifier-type potassium channel (TC 1.A.2.1) family. KCNJ5 subfamily. In terms of assembly, associates with KCNJ3/GIRK1 to form a G-protein-activated heteromultimer pore-forming unit. Associates with KCNJ6/GRIK2 to form a G-protein-activated heteromultimer pore-forming unit. Expressed in the heart.

Its subcellular location is the membrane. The catalysed reaction is K(+)(in) = K(+)(out). Heteromultimer composed of KCNJ3/GIRK1 and KCNJ5/GIRK4 is activated by phosphatidylinositol 4,5 biphosphate (PtdIns(4,5)P2). Functionally, inward rectifier potassium channels are characterized by a greater tendency to allow potassium to flow into the cell rather than out of it. Their voltage dependence is regulated by the concentration of extracellular potassium; as external potassium is raised, the voltage range of the channel opening shifts to more positive voltages. The inward rectification is mainly due to the blockage of outward current by internal magnesium. Can be blocked by external barium. This potassium channel is controlled by G proteins. Forms a functional channel in association with KCNJ3/GIRK1. The chain is G protein-activated inward rectifier potassium channel 4 (Kcnj5) from Mus musculus (Mouse).